Reading from the N-terminus, the 253-residue chain is Triosephosphate isomerase (253 aa).

A substrate-binding site is contributed by 9-11 (NWK). His-98 acts as the Electrophile in catalysis. The active-site Proton acceptor is the Glu-170. Substrate contacts are provided by residues Gly-176, Ser-216, and 237 to 238 (GG).

The protein belongs to the triosephosphate isomerase family. In terms of assembly, homodimer.

The protein resides in the cytoplasm. The enzyme catalyses D-glyceraldehyde 3-phosphate = dihydroxyacetone phosphate. The protein operates within carbohydrate biosynthesis; gluconeogenesis. It functions in the pathway carbohydrate degradation; glycolysis; D-glyceraldehyde 3-phosphate from glycerone phosphate: step 1/1. In terms of biological role, involved in the gluconeogenesis. Catalyzes stereospecifically the conversion of dihydroxyacetone phosphate (DHAP) to D-glyceraldehyde-3-phosphate (G3P). This is Triosephosphate isomerase from Amoebophilus asiaticus (strain 5a2).